Consider the following 556-residue polypeptide: Adenine deaminase (556 aa).

It belongs to the metallo-dependent hydrolases superfamily. Adenine deaminase family. Mn(2+) serves as cofactor.

It carries out the reaction adenine + H2O + H(+) = hypoxanthine + NH4(+). The chain is Adenine deaminase from Archaeoglobus fulgidus (strain ATCC 49558 / DSM 4304 / JCM 9628 / NBRC 100126 / VC-16).